The chain runs to 379 residues: GDSL esterase/lipase EXL2 (379 aa).

The first 35 residues, 1-35 (MKRNSINIHHVTSFSSSPFWCVFFLVLLCKTSTNA), serve as a signal peptide directing secretion. N-linked (GlcNAc...) asparagine glycosylation is present at Asn42. The active-site Nucleophile is Ser54. Active-site residues include Asp358 and His361.

It belongs to the 'GDSL' lipolytic enzyme family.

The protein localises to the secreted. In Arabidopsis thaliana (Mouse-ear cress), this protein is GDSL esterase/lipase EXL2 (EXL2).